Reading from the N-terminus, the 201-residue chain is Recombination protein RecR (201 aa).

The C4-type zinc-finger motif lies at cysteine 57 to cysteine 72. Residues glycine 81–proline 176 enclose the Toprim domain.

It belongs to the RecR family.

Functionally, may play a role in DNA repair. It seems to be involved in an RecBC-independent recombinational process of DNA repair. It may act with RecF and RecO. This Histophilus somni (strain 129Pt) (Haemophilus somnus) protein is Recombination protein RecR.